Reading from the N-terminus, the 123-residue chain is UPF0102 protein Maqu_2464 (123 aa).

This sequence belongs to the UPF0102 family.

This is UPF0102 protein Maqu_2464 from Marinobacter nauticus (strain ATCC 700491 / DSM 11845 / VT8) (Marinobacter aquaeolei).